A 492-amino-acid chain; its full sequence is Glutamyl-tRNA(Gln) amidotransferase subunit A (492 aa).

Residues K78 and S158 each act as charge relay system in the active site. S182 (acyl-ester intermediate) is an active-site residue.

Belongs to the amidase family. GatA subfamily. In terms of assembly, heterotrimer of A, B and C subunits.

It catalyses the reaction L-glutamyl-tRNA(Gln) + L-glutamine + ATP + H2O = L-glutaminyl-tRNA(Gln) + L-glutamate + ADP + phosphate + H(+). Its function is as follows. Allows the formation of correctly charged Gln-tRNA(Gln) through the transamidation of misacylated Glu-tRNA(Gln) in organisms which lack glutaminyl-tRNA synthetase. The reaction takes place in the presence of glutamine and ATP through an activated gamma-phospho-Glu-tRNA(Gln). This Rhodopseudomonas palustris (strain BisB5) protein is Glutamyl-tRNA(Gln) amidotransferase subunit A.